Reading from the N-terminus, the 40-residue chain is Photosystem II reaction center protein J (40 aa).

A helical membrane pass occupies residues 8-28; the sequence is IPLWLIGTVAGIPVIGLVGVF.

The protein belongs to the PsbJ family. In terms of assembly, PSII is composed of 1 copy each of membrane proteins PsbA, PsbB, PsbC, PsbD, PsbE, PsbF, PsbH, PsbI, PsbJ, PsbK, PsbL, PsbM, PsbT, PsbX, PsbY, PsbZ, Psb30/Ycf12, at least 3 peripheral proteins of the oxygen-evolving complex and a large number of cofactors. It forms dimeric complexes.

It is found in the plastid. The protein resides in the chloroplast thylakoid membrane. One of the components of the core complex of photosystem II (PSII). PSII is a light-driven water:plastoquinone oxidoreductase that uses light energy to abstract electrons from H(2)O, generating O(2) and a proton gradient subsequently used for ATP formation. It consists of a core antenna complex that captures photons, and an electron transfer chain that converts photonic excitation into a charge separation. This is Photosystem II reaction center protein J from Hordeum jubatum (Foxtail barley).